The sequence spans 78 residues: Large ribosomal subunit protein bL28 (78 aa).

This sequence belongs to the bacterial ribosomal protein bL28 family.

This is Large ribosomal subunit protein bL28 from Marinobacter nauticus (strain ATCC 700491 / DSM 11845 / VT8) (Marinobacter aquaeolei).